We begin with the raw amino-acid sequence, 548 residues long: MAAKEVKFGDSARKKMLTGVNVLADAVKATLGPKGRNVIIEKSFGAPTITKDGVSVAKEIELEDRFENMGAQLVKDVASRANDDAGDGTTTATVLAQAIVNEGYKAVAAGMNPMDLKRGIDKATIAIVAELKNLSKPCADTKAIAQVGTISANSDSSIGDIIAEAMEKVGKEGVITVEEGTGLENELSVVEGMQFDRGYLSPYFVNKPETMVAELDSPLILLVDKKISNIREMLPVLEAVAKAGRPLLIVSEDVEGEALATLVVNNMRGIVKVAAVKAPGFGDRRKAMLQDIAVLTGGTVISEEIGLSLESATLENLGSAKRVTISKENTIIVDGAGVEQDIQARITQIRAQVAETSSDYDREKLQERLAKLSGGVAVIKVGAGSEVEMKEKKARVEDALHATRAAVEEGVVPGGGVALIRALEALTNLTGDNADQNVGIAVLRRAVEAPLRQIAANSGDEPSVVVNEVKNGKGNYGYNAATGVYGDMIEMGILDPTKVTRSALQAAASIGGLILTTEAAIADKPKAEGAGGGGMPDMGGMGGMGGMM.

ATP contacts are provided by residues 30–33 (TLGP), Lys51, 87–91 (DGTTT), Gly415, 479–481 (NAA), and Asp495.

Belongs to the chaperonin (HSP60) family. Forms a cylinder of 14 subunits composed of two heptameric rings stacked back-to-back. Interacts with the co-chaperonin GroES.

It localises to the cytoplasm. The catalysed reaction is ATP + H2O + a folded polypeptide = ADP + phosphate + an unfolded polypeptide.. Functionally, together with its co-chaperonin GroES, plays an essential role in assisting protein folding. The GroEL-GroES system forms a nano-cage that allows encapsulation of the non-native substrate proteins and provides a physical environment optimized to promote and accelerate protein folding. This is Chaperonin GroEL from Pseudomonas fluorescens (strain SBW25).